The following is a 475-amino-acid chain: MKHSHEEIRKIIPEMRRVQQIHFIGIGGAGMSGIAEILLNEGYQISGSDIADGVVTQRLAQAGAKIYIGHAAEHIKGASVVVVSSAIKDDNPELVASKQKRIPVIQRAQMLAEIMRFRHGIAVAGTHGKTTTTAMISMIYTQAKLDPTFVNGGLVKSAGKNAHLGASRYLIAEADESDASFLHLQPMVSVVTNMEPDHMDTYEGDFEKMKATYVKFLHNLPFYGLAVMCADDPVLMELVPKVGRQVITYGFSEQADYRIEDYEQTGFQGHYTVFCPNNERINVLLNVPGKHNALNATAALAVAKEEGIANEAILEALADFQGAGRRFDQLGEFIRPNGKVRLVDDYGHHPTEVDVTIKAAREGWGDKRIVMIFQPHRYSRTRDLFDDFVQVLSLVDALIMLDVYAAGEAPIVGADSKSLCRSIRNLGKVDPILVSDTSQLGDVLDQIIQDGDLILAQGAGSVSKISRGLAESWKN.

125-131 lines the ATP pocket; the sequence is GTHGKTT.

Belongs to the MurCDEF family.

Its subcellular location is the cytoplasm. It carries out the reaction UDP-N-acetyl-alpha-D-muramate + L-alanine + ATP = UDP-N-acetyl-alpha-D-muramoyl-L-alanine + ADP + phosphate + H(+). Its pathway is cell wall biogenesis; peptidoglycan biosynthesis. Cell wall formation. The chain is UDP-N-acetylmuramate--L-alanine ligase from Haemophilus influenzae (strain PittGG).